Reading from the N-terminus, the 109-residue chain is Large ribosomal subunit protein uL24 (109 aa).

This sequence belongs to the universal ribosomal protein uL24 family. Part of the 50S ribosomal subunit.

In terms of biological role, one of two assembly initiator proteins, it binds directly to the 5'-end of the 23S rRNA, where it nucleates assembly of the 50S subunit. Its function is as follows. One of the proteins that surrounds the polypeptide exit tunnel on the outside of the subunit. The sequence is that of Large ribosomal subunit protein uL24 from Ehrlichia canis (strain Jake).